A 281-amino-acid chain; its full sequence is Shikimate dehydrogenase (NADP(+)) (281 aa).

Shikimate contacts are provided by residues 15 to 17 (SKS) and Thr62. The active-site Proton acceptor is the Lys66. Shikimate-binding residues include Asn87 and Asp102. NADP(+)-binding positions include 127 to 131 (GAGGS), 151 to 156 (NRTPER), and Leu217. Shikimate is bound at residue Tyr219. Gly241 lines the NADP(+) pocket.

Belongs to the shikimate dehydrogenase family. In terms of assembly, homodimer.

It carries out the reaction shikimate + NADP(+) = 3-dehydroshikimate + NADPH + H(+). It participates in metabolic intermediate biosynthesis; chorismate biosynthesis; chorismate from D-erythrose 4-phosphate and phosphoenolpyruvate: step 4/7. Involved in the biosynthesis of the chorismate, which leads to the biosynthesis of aromatic amino acids. Catalyzes the reversible NADPH linked reduction of 3-dehydroshikimate (DHSA) to yield shikimate (SA). The polypeptide is Shikimate dehydrogenase (NADP(+)) (Stenotrophomonas maltophilia (strain K279a)).